Reading from the N-terminus, the 1727-residue chain is Nucleoporin alm1 (1727 aa).

Coiled-coil stretches lie at residues 57 to 361 (QEVN…KNTS), 443 to 463 (NFLSESLETSNNNLTKVQAEL), 542 to 740 (IKEA…AEEL), 804 to 1106 (AARK…INES), 1223 to 1427 (GERS…QLNK), 1497 to 1555 (NEEE…AESA), and 1601 to 1664 (QKEW…KKDS). Residues 1423-1448 (EQLNKPSATPTATTQSEPSTVSLEEF) are compositionally biased toward polar residues. Disordered stretches follow at residues 1423 to 1459 (EQLNKPSATPTATTQSEPSTVSLEEFNSTKEELSSTQ), 1477 to 1500 (EKVRQNSNKSEGTSKDTEIPNEEE), and 1656 to 1727 (LEQS…KKAK). Polar residues-rich tracts occupy residues 1672-1684 (ASKNTDSNKSNSE) and 1702-1714 (VDTNSPPKRSSSD). Phosphoserine is present on serine 1706.

Its subcellular location is the nucleus. It is found in the nuclear pore complex. The protein localises to the nucleus envelope. Maintains the proteasome and its anchor cut8 at the nucleus envelope and is required for kinetochore component proteostasis. Proper kinetochore stoichiometry ensures the correct attachment of kinetochores to spindle microtubules during cytokinesis. Required for the localization of spindle assembly checkpoint (SAC) protein mad2 and bub1 to the nucleus envelope during interphase, but not their localization during mitosis. The chain is Nucleoporin alm1 from Schizosaccharomyces pombe (strain 972 / ATCC 24843) (Fission yeast).